The sequence spans 89 residues: Large ribosomal subunit protein bL27 (89 aa).

Positions 1 to 22 (MAQKKAGGSSRNGRDSAGRRLG) are disordered.

Belongs to the bacterial ribosomal protein bL27 family.

The sequence is that of Large ribosomal subunit protein bL27 from Gluconacetobacter diazotrophicus (strain ATCC 49037 / DSM 5601 / CCUG 37298 / CIP 103539 / LMG 7603 / PAl5).